Consider the following 1226-residue polypeptide: Methionine synthase (1226 aa).

One can recognise a Hcy-binding domain in the interval 7-327 (KVQIEKQLSE…EHIRQMALVV (321 aa)). The Zn(2+) site is built by cysteine 249, cysteine 312, and cysteine 313. Residues 358-619 (FINVGERTNV…VPEDLREAVE (262 aa)) form the Pterin-binding domain. The B12-binding N-terminal domain maps to 652–746 (SALEWRDWPV…FINASKEVGA (95 aa)). Methylcob(III)alamin is bound by residues glutamate 696, 758 to 762 (GDVHD), histidine 761, serine 806, threonine 810, and alanine 862. The B12-binding domain occupies 748–883 (NGKILLATVK…SDELKPSFVE (136 aa)). The AdoMet activation domain occupies 899–1226 (KQPRTKPVTL…AEKWLGPNLN (328 aa)). Residues aspartate 949, arginine 1137, and 1192–1193 (YF) contribute to the S-adenosyl-L-methionine site.

This sequence belongs to the vitamin-B12 dependent methionine synthase family. The cofactor is methylcob(III)alamin. Requires Zn(2+) as cofactor.

It catalyses the reaction (6S)-5-methyl-5,6,7,8-tetrahydrofolate + L-homocysteine = (6S)-5,6,7,8-tetrahydrofolate + L-methionine. Its pathway is amino-acid biosynthesis; L-methionine biosynthesis via de novo pathway; L-methionine from L-homocysteine (MetH route): step 1/1. In terms of biological role, catalyzes the transfer of a methyl group from methyl-cobalamin to homocysteine, yielding enzyme-bound cob(I)alamin and methionine. Subsequently, remethylates the cofactor using methyltetrahydrofolate. This Aliivibrio fischeri (strain ATCC 700601 / ES114) (Vibrio fischeri) protein is Methionine synthase (metH).